The primary structure comprises 503 residues: Maturase K (503 aa).

It belongs to the intron maturase 2 family. MatK subfamily.

Its subcellular location is the plastid. It localises to the chloroplast. Its function is as follows. Usually encoded in the trnK tRNA gene intron. Probably assists in splicing its own and other chloroplast group II introns. This is Maturase K from Vicia sativa (Spring vetch).